A 156-amino-acid polypeptide reads, in one-letter code: SPbeta prophage-derived uncharacterized protein YorH (156 aa).

This Bacillus subtilis (strain 168) protein is SPbeta prophage-derived uncharacterized protein YorH (yorH).